Reading from the N-terminus, the 712-residue chain is Polyribonucleotide nucleotidyltransferase (712 aa).

Positions 487 and 493 each coordinate Mg(2+). Positions 554 to 613 (PKIITMTINPDKIRDVIGPSGKQINKIIEETGVKIDIEQDGTVFISSINQEMNDKAKKII) constitute a KH domain. In terms of domain architecture, S1 motif spans 623–691 (GEIYEAKVKR…KQGRVNLSRK (69 aa)).

It belongs to the polyribonucleotide nucleotidyltransferase family. Mg(2+) is required as a cofactor.

It localises to the cytoplasm. The enzyme catalyses RNA(n+1) + phosphate = RNA(n) + a ribonucleoside 5'-diphosphate. Functionally, involved in mRNA degradation. Catalyzes the phosphorolysis of single-stranded polyribonucleotides processively in the 3'- to 5'-direction. In Bacillus cereus (strain ATCC 14579 / DSM 31 / CCUG 7414 / JCM 2152 / NBRC 15305 / NCIMB 9373 / NCTC 2599 / NRRL B-3711), this protein is Polyribonucleotide nucleotidyltransferase.